Here is a 223-residue protein sequence, read N- to C-terminus: uncharacterized protein (223 aa).

The protein to M.jannaschii MJ1453.

This is an uncharacterized protein from Methanothermobacter thermautotrophicus (strain ATCC 29096 / DSM 1053 / JCM 10044 / NBRC 100330 / Delta H) (Methanobacterium thermoautotrophicum).